The primary structure comprises 308 residues: Methionyl-tRNA formyltransferase (308 aa).

109 to 112 is a binding site for (6S)-5,6,7,8-tetrahydrofolate; the sequence is SLLP.

Belongs to the Fmt family.

It catalyses the reaction L-methionyl-tRNA(fMet) + (6R)-10-formyltetrahydrofolate = N-formyl-L-methionyl-tRNA(fMet) + (6S)-5,6,7,8-tetrahydrofolate + H(+). In terms of biological role, attaches a formyl group to the free amino group of methionyl-tRNA(fMet). The formyl group appears to play a dual role in the initiator identity of N-formylmethionyl-tRNA by promoting its recognition by IF2 and preventing the misappropriation of this tRNA by the elongation apparatus. The protein is Methionyl-tRNA formyltransferase of Phenylobacterium zucineum (strain HLK1).